We begin with the raw amino-acid sequence, 979 residues long: Receptor-type tyrosine-protein phosphatase-like N (979 aa).

The signal sequence occupies residues 1-34; it reads MRRPRRPGGLGGSGGLRLLLCLLLLSSRPGGCSA. Residues 35–131 form an RESP18 homology domain region; that stretch reads VSAHGCLFDR…RPRDRSGLAP (97 aa). At 35–575 the chain is on the lumenal side; that stretch reads VSAHGCLFDR…QTAHSTSPMR (541 aa). C53 and C62 are disulfide-bonded. 2 stretches are compositionally biased toward basic and acidic residues: residues 112 to 127 and 304 to 323; these read RIPRLRPPEPRPRDRS and RAEDSPEGYEKEGLGDRGEK. Disordered regions lie at residues 112 to 173, 289 to 329, and 393 to 439; these read RIPR…SSSL, SRAR…SPAV, and VEGR…ARPP. Phosphoserine is present on S308. The segment covering 415–433 has biased composition (low complexity); that stretch reads SPTSSEVQQVPSPVSSEPP. A glycan (O-linked (GalNAc...) threonine) is linked at T441. Residues 449–575 form a sufficient for dimerization of proICA512 region; sequence SPLGQSQPTV…QTAHSTSPMR (127 aa). 2 N-linked (GlcNAc...) asparagine glycosylation sites follow: N506 and N524. A helical membrane pass occupies residues 576-600; the sequence is SVLLTLVALAGVAGLLVALAVALCV. Positions 601-732 are sufficient for dimerization of proICA512; sequence RQHARQQDKE…PNTCATAQGE (132 aa). Topologically, residues 601–979 are cytoplasmic; it reads RQHARQQDKE…VNAILKALPQ (379 aa). Positions 643 to 680 are disordered; sequence NRAEGPPEPSRVSSVSSQFSDAAQASPSSHSSTPSWCE. Over residues 652–677 the composition is skewed to low complexity; sequence SRVSSVSSQFSDAAQASPSSHSSTPS. A Tyrosine-protein phosphatase domain is found at 709–969; that stretch reads LAKEWQALCA…EFALTAVAEE (261 aa). Residue K754 forms a Glycyl lysine isopeptide (Lys-Gly) (interchain with G-Cter in SUMO) linkage.

It belongs to the protein-tyrosine phosphatase family. Receptor class 8 subfamily. In terms of assembly, homodimer; shown for the unprocessed protein (proICA512) in the endoplasmic reticulum and resolved during protein maturation as ICA512-TMF seems to be predominantly monomeric in secretory granules; however, ICA512-CCF interacts with ICA512-TMF disrupting the ICA512-TMF:SNTB2 complex. The isolated lumenal RESP18 homology domain has been shown to form disulfide-linked homooligomers. Interacts (via cytoplasmic domain) with phosphorylated SNTB2; this protects PTPRN against cleavage by CAPN1 to produce ICA512-CCF. Dephosphorylation of SNTB2 upon insulin stimulation disrupts the interaction and results in PTPRN cleavage. Interacts with SNX19. ICA512-CCF interacts with PIAS4; in the nucleus. Interacts with STAT5B (phosphorylated); down-regulated by ICA512-CCF sumoylation; ICA512-CCF prevents STAT5B dephosphorylation; ICA512-CCF mediates interaction of STAT5B with PIAS4. Interacts (via RESP18 homology domain) with insulin and proinsulin. Interacts with PTPRN2, PTPRA and PTPRE. N-glycosylated. Post-translationally, O-glycosylated with core 1 or possibly core 8 glycans. In terms of processing, subject to proteolytic cleavage at multiple sites. Subject to cleavage on a pair of basic residues. On exocytosis of secretory granules in pancreatic beta-cells ICA512-TMF is transiently inserted in the plasma-membrane and cleaved by mu-type calpain CPN1 to yield ICA512-CCF. Sumoylated at two sites including Lys-754. Sumoylation decreases interaction with STAT5. As to expression, expression is restricted to neuroendocrine cells. Found in pancreas, brain and pituitary.

It is found in the membrane. Its subcellular location is the cytoplasmic vesicle. The protein localises to the secretory vesicle membrane. It localises to the perikaryon. The protein resides in the cell projection. It is found in the axon. Its subcellular location is the synapse. The protein localises to the cell membrane. It localises to the endosome. The protein resides in the nucleus. Functionally, plays a role in vesicle-mediated secretory processes. Required for normal accumulation of secretory vesicles in hippocampus, pituitary and pancreatic islets. Required for the accumulation of normal levels of insulin-containing vesicles and preventing their degradation. Plays a role in insulin secretion in response to glucose stimuli. Required for normal accumulation of the neurotransmitters norepinephrine, dopamine and serotonin in the brain. In females, but not in males, required for normal accumulation and secretion of pituitary hormones, such as luteinizing hormone (LH) and follicle-stimulating hormone (FSH). Required to maintain normal levels of renin expression and renin release. Seems to lack intrinsic enzyme activity. May regulate catalytic active protein-tyrosine phosphatases such as PTPRA through dimerization. Its function is as follows. ICA512-TMF regulates dynamics and exocytosis of insulin secretory granules (SGs); binding of ICA512-TMF to SNTB2/beta-2-syntrophin is proposed to restrain SGs mobility and exocytosis by tethering them to the actin cytoskeleton depending on UTRN; the function is inhibited by cytoplasmic ICA512-CFF dimerizing with ICA512-TMF and displacing SNTB2. ICA512-CCF translocated to the nucleus promotes expression of insulin and other granule-related genes; the function implicates binding to and regulating activity of STAT5B probably by preventing its dephosphorylation and potentially by inducing its sumoylation by recruiting PIAS4. Enhances pancreatic beta-cell proliferation by converging with signaling by STAT5B and STAT3. ICA512-CCF located in the cytoplasm regulates dynamics and exocytosis of insulin secretory granules (SGs) by dimerizing with ICA512-TMF and displacing SNTB2 thus enhancing SGs mobility and exocytosis. In Homo sapiens (Human), this protein is Receptor-type tyrosine-protein phosphatase-like N (PTPRN).